We begin with the raw amino-acid sequence, 324 residues long: Ribose-phosphate pyrophosphokinase (324 aa).

Residues Asn-45–Glu-47 and Arg-104–Gln-105 contribute to the ATP site. Positions 138 and 178 each coordinate Mg(2+). The active site involves Lys-201. Residues Arg-203, Asp-229, and Asp-233 to Thr-237 contribute to the D-ribose 5-phosphate site.

The protein belongs to the ribose-phosphate pyrophosphokinase family. Class I subfamily. Homohexamer. It depends on Mg(2+) as a cofactor.

It localises to the cytoplasm. It carries out the reaction D-ribose 5-phosphate + ATP = 5-phospho-alpha-D-ribose 1-diphosphate + AMP + H(+). The protein operates within metabolic intermediate biosynthesis; 5-phospho-alpha-D-ribose 1-diphosphate biosynthesis; 5-phospho-alpha-D-ribose 1-diphosphate from D-ribose 5-phosphate (route I): step 1/1. Functionally, involved in the biosynthesis of the central metabolite phospho-alpha-D-ribosyl-1-pyrophosphate (PRPP) via the transfer of pyrophosphoryl group from ATP to 1-hydroxyl of ribose-5-phosphate (Rib-5-P). The protein is Ribose-phosphate pyrophosphokinase of Streptomyces avermitilis (strain ATCC 31267 / DSM 46492 / JCM 5070 / NBRC 14893 / NCIMB 12804 / NRRL 8165 / MA-4680).